Here is a 612-residue protein sequence, read N- to C-terminus: Dihydroxy-acid dehydratase (612 aa).

Asp-81 lines the Mg(2+) pocket. Cys-122 contributes to the [2Fe-2S] cluster binding site. Residues Asp-123 and Lys-124 each coordinate Mg(2+). N6-carboxylysine is present on Lys-124. Cys-195 contributes to the [2Fe-2S] cluster binding site. Glu-491 provides a ligand contact to Mg(2+). Ser-517 acts as the Proton acceptor in catalysis.

This sequence belongs to the IlvD/Edd family. Homodimer. It depends on [2Fe-2S] cluster as a cofactor. Requires Mg(2+) as cofactor.

The enzyme catalyses (2R)-2,3-dihydroxy-3-methylbutanoate = 3-methyl-2-oxobutanoate + H2O. It carries out the reaction (2R,3R)-2,3-dihydroxy-3-methylpentanoate = (S)-3-methyl-2-oxopentanoate + H2O. It participates in amino-acid biosynthesis; L-isoleucine biosynthesis; L-isoleucine from 2-oxobutanoate: step 3/4. Its pathway is amino-acid biosynthesis; L-valine biosynthesis; L-valine from pyruvate: step 3/4. In terms of biological role, functions in the biosynthesis of branched-chain amino acids. Catalyzes the dehydration of (2R,3R)-2,3-dihydroxy-3-methylpentanoate (2,3-dihydroxy-3-methylvalerate) into 2-oxo-3-methylpentanoate (2-oxo-3-methylvalerate) and of (2R)-2,3-dihydroxy-3-methylbutanoate (2,3-dihydroxyisovalerate) into 2-oxo-3-methylbutanoate (2-oxoisovalerate), the penultimate precursor to L-isoleucine and L-valine, respectively. This chain is Dihydroxy-acid dehydratase, found in Haemophilus influenzae (strain PittEE).